The primary structure comprises 333 residues: 3-isopropylmalate/3-methylmalate dehydrogenase (333 aa).

Substrate is bound by residues Arg81, Arg91, Arg112, and Asp203. Residues Asp203, Asp227, and Asp231 each coordinate Mg(2+). 260-272 (GSAPDIAGKKIAN) contacts NAD(+).

This sequence belongs to the isocitrate and isopropylmalate dehydrogenases family. In terms of assembly, homotetramer. The cofactor is Mg(2+). Mn(2+) serves as cofactor.

Its subcellular location is the cytoplasm. The catalysed reaction is (2R,3S)-3-isopropylmalate + NAD(+) = 4-methyl-2-oxopentanoate + CO2 + NADH. The enzyme catalyses (2R,3S)-3-methylmalate + NAD(+) = 2-oxobutanoate + CO2 + NADH. It carries out the reaction (R)-malate + NAD(+) = pyruvate + CO2 + NADH. Its pathway is amino-acid biosynthesis; L-leucine biosynthesis; L-leucine from 3-methyl-2-oxobutanoate: step 3/4. It functions in the pathway amino-acid biosynthesis; L-isoleucine biosynthesis; 2-oxobutanoate from pyruvate: step 3/3. Functionally, catalyzes the oxidation of 3-carboxy-2-hydroxy-4-methylpentanoate (3-isopropylmalate) to 3-carboxy-4-methyl-2-oxopentanoate, which decarboxylates to 4-methyl-2-oxopentanoate (2-oxoisocaproate). Also catalyzes the oxidative decarboxylation of 3-methylmalate to 2-oxobutyrate, and that of D-malate to pyruvate. Cannot use NADP(+) instead of NAD(+). Cannot catalyze the oxidation of L-malate, L-tartrate, D-tartrate, DL-isocitrate, or DL-lactate. This chain is 3-isopropylmalate/3-methylmalate dehydrogenase (leuB), found in Methanocaldococcus jannaschii (strain ATCC 43067 / DSM 2661 / JAL-1 / JCM 10045 / NBRC 100440) (Methanococcus jannaschii).